Here is a 253-residue protein sequence, read N- to C-terminus: Adenylate kinase (253 aa).

15–20 (GSGKGT) is an ATP binding site. The tract at residues 35-64 (SSGDLLRNAVSQNTPLGQEIKSYLDQGKLL) is NMP. AMP contacts are provided by residues Ser36, Arg41, 62–64 (KLL), 103–106 (GFPR), and Gln110. Positions 143 to 176 (SRYICPSCQGIYNKQQGFSRCPKCLVELTRRSDD) are LID. Residue Arg144 participates in ATP binding. Zn(2+) is bound by residues Cys147 and Cys150. An ATP-binding site is contributed by 153-154 (IY). The Zn(2+) site is built by Cys163 and Cys166. AMP is bound by residues Arg173 and Arg184. Ala212 contacts ATP.

The protein belongs to the adenylate kinase family. As to quaternary structure, monomer.

It localises to the cytoplasm. It carries out the reaction AMP + ATP = 2 ADP. It functions in the pathway purine metabolism; AMP biosynthesis via salvage pathway; AMP from ADP: step 1/1. Catalyzes the reversible transfer of the terminal phosphate group between ATP and AMP. Plays an important role in cellular energy homeostasis and in adenine nucleotide metabolism. The sequence is that of Adenylate kinase from Chlamydia muridarum (strain MoPn / Nigg).